Consider the following 198-residue polypeptide: Peptide methionine sulfoxide reductase MsrA 2 (198 aa).

The active site involves C32.

It belongs to the MsrA Met sulfoxide reductase family.

The catalysed reaction is L-methionyl-[protein] + [thioredoxin]-disulfide + H2O = L-methionyl-(S)-S-oxide-[protein] + [thioredoxin]-dithiol. It carries out the reaction [thioredoxin]-disulfide + L-methionine + H2O = L-methionine (S)-S-oxide + [thioredoxin]-dithiol. Its function is as follows. Has an important function as a repair enzyme for proteins that have been inactivated by oxidation. Catalyzes the reversible oxidation-reduction of methionine sulfoxide in proteins to methionine. This Rhizobium meliloti (strain 1021) (Ensifer meliloti) protein is Peptide methionine sulfoxide reductase MsrA 2 (msrA2).